The primary structure comprises 180 residues: Type IV major pilin protein PilE1 (180 aa).

Residues 1 to 7 (MNTLQKG) constitute a propeptide that is removed on maturation. An N-methylphenylalanine modification is found at Phe8. The chain crosses the membrane as a helical span at residues 8–28 (FTLIELMIVIAIVGILAAVAL). Ser70 carries an O-linked (GlcNAc...) serine glycan. Cys128 and Cys160 form a disulfide bridge.

It belongs to the N-Me-Phe pilin family. In terms of assembly, the pili are polar flexible filaments of about 5.4 nanometers diameter and 2.5 micrometers average length; they consist of only a single polypeptide chain arranged in a helical configuration of five subunits per turn in the assembled pilus.

The protein resides in the fimbrium. The protein localises to the membrane. In terms of biological role, major component of the type IV pilus (T4P) that plays a role in cellular adherence, microcolony formation, resistance to neutrophil mediated killing, twitching motility as well as transformation. Mediates the attachment and the formation of bacterial microcolonies on host epithelial cells. Mechanistically, pili retractation induces host NF-kappa-B activation in infected cells, which is temporally associated with the formation of gonococcal microcolonies. The protein is Type IV major pilin protein PilE1 (pilE1) of Neisseria gonorrhoeae.